The chain runs to 394 residues: Formate-dependent phosphoribosylglycinamide formyltransferase (394 aa).

Residues 22–23 and glutamate 82 contribute to the N(1)-(5-phospho-beta-D-ribosyl)glycinamide site; that span reads EL. Residues arginine 114, lysine 155, 160–165, 195–198, and glutamate 203 contribute to the ATP site; these read SSGKGQ and EGFV. The 190-residue stretch at 119–308 folds into the ATP-grasp domain; that stretch reads RLAAETLKLP…EFALHVRAIL (190 aa). Residues glutamate 267 and glutamate 279 each contribute to the Mg(2+) site. Residues aspartate 286, lysine 357, and 364-365 contribute to the N(1)-(5-phospho-beta-D-ribosyl)glycinamide site; that span reads RR.

This sequence belongs to the PurK/PurT family. In terms of assembly, homodimer.

It carries out the reaction N(1)-(5-phospho-beta-D-ribosyl)glycinamide + formate + ATP = N(2)-formyl-N(1)-(5-phospho-beta-D-ribosyl)glycinamide + ADP + phosphate + H(+). The protein operates within purine metabolism; IMP biosynthesis via de novo pathway; N(2)-formyl-N(1)-(5-phospho-D-ribosyl)glycinamide from N(1)-(5-phospho-D-ribosyl)glycinamide (formate route): step 1/1. Involved in the de novo purine biosynthesis. Catalyzes the transfer of formate to 5-phospho-ribosyl-glycinamide (GAR), producing 5-phospho-ribosyl-N-formylglycinamide (FGAR). Formate is provided by PurU via hydrolysis of 10-formyl-tetrahydrofolate. The chain is Formate-dependent phosphoribosylglycinamide formyltransferase from Tolumonas auensis (strain DSM 9187 / NBRC 110442 / TA 4).